We begin with the raw amino-acid sequence, 313 residues long: Mitochondrial uncoupling protein 5 (313 aa).

Solcar repeat units follow at residues 4 to 108 (KGFA…IKGE), 117 to 208 (MPLM…VKET), and 217 to 307 (DGLG…VKKL). A run of 6 helical transmembrane segments spans residues 6–26 (FAEGGIASIVAGCSTHPLDLI), 77–97 (MRALFSGVSATVLRQTLYSTT), 123–143 (IGAGAIAGAIGAAVGNPADVA), 182–202 (RGSSLTINRAMLVTSSQLASY), 223–243 (VSASFAAGFVASVASNPVDVI), and 280–300 (YKGFIPTVSRQAPFTVVLFVT).

Belongs to the mitochondrial carrier (TC 2.A.29) family. Expressed in roots, leaves, stems and flowers.

The protein localises to the mitochondrion inner membrane. PUMPS are mitochondrial transporter proteins that create proton leaks across the inner mitochondrial membrane, thus uncoupling oxidative phosphorylation. This leads to a decrease in the efficiency of oxidative phosphorylation and an increase in heat production. May be involved in protecting plant cells against oxidative stress damage. Recombinant PUMP5, reconstituted into liposomes, transports a wide range of dicarboxylic acids including malate, oxaloacetate and succinate as well as phosphate, sulfate and thiosulfate. However, it is unknown if these transports are of any biological significance in vivo. The sequence is that of Mitochondrial uncoupling protein 5 (PUMP5) from Arabidopsis thaliana (Mouse-ear cress).